We begin with the raw amino-acid sequence, 679 residues long: DNA ligase (679 aa).

Residues 86-90 (DEAYD) and 129-130 (ST) contribute to the NAD(+) site. Residue K167 is the N6-AMP-lysine intermediate of the active site. 3 residues coordinate NAD(+): R183, E214, and K326. Zn(2+) is bound by residues C417, C420, C433, and C439. A BRCT domain is found at 599–679 (GEKSPISGKT…EAYRQLVSLD (81 aa)).

This sequence belongs to the NAD-dependent DNA ligase family. LigA subfamily. The cofactor is Mg(2+). It depends on Mn(2+) as a cofactor.

It catalyses the reaction NAD(+) + (deoxyribonucleotide)n-3'-hydroxyl + 5'-phospho-(deoxyribonucleotide)m = (deoxyribonucleotide)n+m + AMP + beta-nicotinamide D-nucleotide.. DNA ligase that catalyzes the formation of phosphodiester linkages between 5'-phosphoryl and 3'-hydroxyl groups in double-stranded DNA using NAD as a coenzyme and as the energy source for the reaction. It is essential for DNA replication and repair of damaged DNA. In Desulfotalea psychrophila (strain LSv54 / DSM 12343), this protein is DNA ligase.